The sequence spans 348 residues: Rhodopsin (348 aa).

An N-acetylmethionine modification is found at methionine 1. The Extracellular portion of the chain corresponds to 1–36 (MNGTEGLNFYVPFSNKTGVVRSPFEYPQYYLAEPWQ). Residues asparagine 2 and asparagine 15 are each glycosylated (N-linked (GlcNAc...) asparagine). The chain crosses the membrane as a helical span at residues 37-61 (FSVLAAYMFLLIVLGFPINFLTLYV). Over 62–73 (TVQHKKLRTPLN) the chain is Cytoplasmic. Residues 74–99 (YILLNLAVANLFMVFGGFTTTLYTSL) form a helical membrane-spanning segment. Residues 100-111 (HAYFVFGPTGCN) are Extracellular-facing. A disulfide bridge connects residues cysteine 110 and cysteine 187. The helical transmembrane segment at 112-133 (LEGFFATLGGEIALWSLVVLAI) threads the bilayer. Positions 134-136 (ERY) match the 'Ionic lock' involved in activated form stabilization motif. Topologically, residues 134–152 (ERYVVVCKPMSNFRFGENH) are cytoplasmic. A helical transmembrane segment spans residues 153–173 (AIMGLALTWIMAMACAAAPLV). Residues 174 to 202 (GWSRYIPEGMQCSCGIDYYTSRQEVNNES) lie on the Extracellular side of the membrane. Glutamate 201 is a binding site for Zn(2+). A helical transmembrane segment spans residues 203 to 227 (FVIYMFVVHFTIPLVIIFFCYGQLV). At 228-252 (FTVKEAAAQQQESATTQKAEKEVTR) the chain is on the cytoplasmic side. A helical transmembrane segment spans residues 253-274 (MVIIMVVAFLICWVPYASVAFY). The Extracellular segment spans residues 275–286 (IFTHQGSDFGPI). Glutamine 279 lines the Zn(2+) pocket. A helical transmembrane segment spans residues 287–306 (FMTIPSFFAKSSSIYNPVIY). Lysine 296 is modified (N6-(retinylidene)lysine). Residues 307-348 (IMMNKQFRNCMLTTLCCGRNPLGDDEASTTASKTETSQVAPA) lie on the Cytoplasmic side of the membrane. Residues cysteine 322 and cysteine 323 are each lipidated (S-palmitoyl cysteine). Position 334 is a phosphoserine (serine 334). Phosphothreonine is present on residues threonine 335 and threonine 336. Phosphoserine is present on serine 338. Residues threonine 340 and threonine 342 each carry the phosphothreonine modification. Residue serine 343 is modified to Phosphoserine.

Belongs to the G-protein coupled receptor 1 family. Opsin subfamily. As to quaternary structure, homodimer. May form a complex composed of RHO, GRK1 and RCVRN in a Ca(2+)-dependent manner; RCVRN prevents the interaction between GRK1 and RHO. Interacts with GRK1. Interacts (phosphorylated form) with SAG. Interacts with GNAT1. Interacts with GNAT3. SAG and G-proteins compete for a common binding site. Interacts with PRCD; the interaction promotes PRCD stability. Forms a complex with ASAP1 and ARF4. Forms a complex with ASAP1, RAB11A, Rabin8/RAB3IP, ARF4 and RAB11FIP3; the complex regulates Golgi-to-cilia rhodopsin/RHO transport in photoreceptors. Contains one covalently linked retinal chromophore. Upon light absorption, the covalently bound 11-cis-retinal is converted to all-trans-retinal. After hydrolysis of the Schiff base and release of the covalently bound all-trans-retinal, active rhodopsin is regenerated by binding of a fresh molecule of 11-cis-retinal.

The protein resides in the membrane. It is found in the cell projection. It localises to the cilium. The protein localises to the photoreceptor outer segment. Its function is as follows. Photoreceptor required for image-forming vision at low light intensity. Light-induced isomerization of 11-cis to all-trans retinal triggers a conformational change that activates signaling via G-proteins. Signaling mediates the activation of phospholipase C. Subsequent receptor phosphorylation mediates displacement of the bound G-protein alpha subunit by arrestin and terminates signaling. The protein is Rhodopsin (RHO) of Tursiops truncatus (Atlantic bottle-nosed dolphin).